Here is a 279-residue protein sequence, read N- to C-terminus: Phycobilisome rod-core linker polypeptide CpcG1 (279 aa).

In terms of domain architecture, PBS-linker spans 11–189; that stretch reads TTQNQRVEGY…YWRNRLLEQF (179 aa).

This sequence belongs to the phycobilisome linker protein family. In terms of assembly, the phycobilisome is a hemidiscoidal structure that is composed of two distinct substructures: a core complex and a number of rods radiating from the core.

It localises to the cellular thylakoid membrane. Rod-core linker protein required for attachment of phycocyanin to allophycocyanin in cores of phycobilisomes. In terms of biological role, linker polypeptides determine the state of aggregation and the location of the disk-shaped phycobiliprotein units within the phycobilisome and modulate their spectroscopic properties in order to mediate a directed and optimal energy transfer. This Mastigocladus laminosus (Fischerella sp.) protein is Phycobilisome rod-core linker polypeptide CpcG1 (cpcG1).